Here is a 445-residue protein sequence, read N- to C-terminus: Phosphoglucosamine mutase (445 aa).

Residue S102 is the Phosphoserine intermediate of the active site. Mg(2+)-binding residues include S102, D241, D243, and D245. S102 carries the phosphoserine modification.

The protein belongs to the phosphohexose mutase family. Mg(2+) is required as a cofactor. In terms of processing, activated by phosphorylation.

The enzyme catalyses alpha-D-glucosamine 1-phosphate = D-glucosamine 6-phosphate. Catalyzes the conversion of glucosamine-6-phosphate to glucosamine-1-phosphate. The protein is Phosphoglucosamine mutase of Escherichia coli O139:H28 (strain E24377A / ETEC).